Reading from the N-terminus, the 361-residue chain is Peptide chain release factor 1 (361 aa).

Glutamine 237 is modified (N5-methylglutamine). Residues 285 to 306 (QAEQSAQQTEQRRQLVGSGDRS) are disordered.

Belongs to the prokaryotic/mitochondrial release factor family. Methylated by PrmC. Methylation increases the termination efficiency of RF1.

Its subcellular location is the cytoplasm. In terms of biological role, peptide chain release factor 1 directs the termination of translation in response to the peptide chain termination codons UAG and UAA. The sequence is that of Peptide chain release factor 1 from Alkalilimnicola ehrlichii (strain ATCC BAA-1101 / DSM 17681 / MLHE-1).